The sequence spans 273 residues: Large ribosomal subunit protein uL2 (273 aa).

2 disordered regions span residues 32-53 (PLVE…TTRH) and 221-273 (RGTA…RRSK). A compositionally biased stretch (low complexity) spans 39-48 (KSGGRNNNGR).

It belongs to the universal ribosomal protein uL2 family. Part of the 50S ribosomal subunit. Forms a bridge to the 30S subunit in the 70S ribosome.

In terms of biological role, one of the primary rRNA binding proteins. Required for association of the 30S and 50S subunits to form the 70S ribosome, for tRNA binding and peptide bond formation. It has been suggested to have peptidyltransferase activity; this is somewhat controversial. Makes several contacts with the 16S rRNA in the 70S ribosome. This Erwinia tasmaniensis (strain DSM 17950 / CFBP 7177 / CIP 109463 / NCPPB 4357 / Et1/99) protein is Large ribosomal subunit protein uL2.